Reading from the N-terminus, the 104-residue chain is Large ribosomal subunit protein uL24 (104 aa).

It belongs to the universal ribosomal protein uL24 family. In terms of assembly, part of the 50S ribosomal subunit.

Functionally, one of two assembly initiator proteins, it binds directly to the 5'-end of the 23S rRNA, where it nucleates assembly of the 50S subunit. One of the proteins that surrounds the polypeptide exit tunnel on the outside of the subunit. This Bartonella bacilliformis (strain ATCC 35685 / KC583 / Herrer 020/F12,63) protein is Large ribosomal subunit protein uL24.